A 447-amino-acid chain; its full sequence is MRINKPFSDDSNTVVFVSSKTYGVKEEAAHNPNVEFGVVLPTDFPAFNRALVQFLKRKKTKLNINLDSLIELYKKNENSGCFHTAIKTVITSVTFCETTPFTMKTKPEKNVEVAVQCAVEYHNLVKEYETVGEYVNLARELQDTPSDLLYSEVFVKHFEKAASKLPVKIKVLKQSDLIKKKMGLLLGVNQGSEREARLLVISYQANKNSKEKLAFVGKGITYDSGGMNIKTGDYMRGMKYDMSGAAIVCSTVLALAKNKVKTNVVAVAALTENLPGAKAQRPDDIKIAYNGKSVEIDNTDAEGRLVLADAITYAAKDLAATHIIDVATLTGLMSYILSTTYTGIFSTCDHQWESFKKAACSAGEPVWRLPMHPDYLKPLQLTKLADLQNSTSARGAGSSRAACFLAEFREGVSLIHCDIASTASIENLGQGVLVRTLYERASQLANK.

Positions 218 and 223 each coordinate Mn(2+). Lys-230 is an active-site residue. Mn(2+)-binding residues include Asp-241, Asp-300, and Glu-302. Arg-304 is a catalytic residue.

The protein belongs to the peptidase M17 family. Requires Mn(2+) as cofactor.

The protein localises to the cytoplasm. The enzyme catalyses Release of an N-terminal amino acid, Xaa-|-Yaa-, in which Xaa is preferably Leu, but may be other amino acids including Pro although not Arg or Lys, and Yaa may be Pro. Amino acid amides and methyl esters are also readily hydrolyzed, but rates on arylamides are exceedingly low.. It carries out the reaction Release of an N-terminal amino acid, preferentially leucine, but not glutamic or aspartic acids.. Its function is as follows. Presumably involved in the processing and regular turnover of intracellular proteins. Catalyzes the removal of unsubstituted N-terminal amino acids from various peptides. The sequence is that of Probable cytosol aminopeptidase (pepA) from Mycoplasma genitalium (strain ATCC 33530 / DSM 19775 / NCTC 10195 / G37) (Mycoplasmoides genitalium).